The following is a 203-amino-acid chain: ATP-dependent Clp protease proteolytic subunit 2 (203 aa).

Ser-98 acts as the Nucleophile in catalysis. His-123 is an active-site residue.

Belongs to the peptidase S14 family. In terms of assembly, fourteen ClpP subunits assemble into 2 heptameric rings which stack back to back to give a disk-like structure with a central cavity, resembling the structure of eukaryotic proteasomes.

The protein resides in the cytoplasm. The enzyme catalyses Hydrolysis of proteins to small peptides in the presence of ATP and magnesium. alpha-casein is the usual test substrate. In the absence of ATP, only oligopeptides shorter than five residues are hydrolyzed (such as succinyl-Leu-Tyr-|-NHMec, and Leu-Tyr-Leu-|-Tyr-Trp, in which cleavage of the -Tyr-|-Leu- and -Tyr-|-Trp bonds also occurs).. Functionally, cleaves peptides in various proteins in a process that requires ATP hydrolysis. Has a chymotrypsin-like activity. Plays a major role in the degradation of misfolded proteins. This is ATP-dependent Clp protease proteolytic subunit 2 from Chlamydia muridarum (strain MoPn / Nigg).